The primary structure comprises 454 residues: uncharacterized protein (454 aa).

An HNH domain is found at 364-405 (CSRPGCDAPAYHSEVHHVTPWTTTHRTDINDLTLACGPDNRL). A disordered region spans residues 415-434 (NAKGDTEWLPPAHLDHGQPR).

The protein belongs to the Rv1128c/1148c/1588c/1702c/1945/3466 family.

This is an uncharacterized protein from Mycobacterium tuberculosis (strain CDC 1551 / Oshkosh).